Here is a 471-residue protein sequence, read N- to C-terminus: Soluble pyridine nucleotide transhydrogenase (471 aa).

41 to 50 (EREPSVGGGC) is a binding site for FAD.

This sequence belongs to the class-I pyridine nucleotide-disulfide oxidoreductase family. FAD serves as cofactor.

It localises to the cytoplasm. The enzyme catalyses NAD(+) + NADPH = NADH + NADP(+). Functionally, conversion of NADPH, generated by peripheral catabolic pathways, to NADH, which can enter the respiratory chain for energy generation. The polypeptide is Soluble pyridine nucleotide transhydrogenase (Aliivibrio fischeri (strain ATCC 700601 / ES114) (Vibrio fischeri)).